Here is a 637-residue protein sequence, read N- to C-terminus: Early transcription factor 70 kDa subunit (637 aa).

The region spanning 32–185 (RTIIDENRSV…GHIIDLMSEE (154 aa)) is the Helicase ATP-binding domain. 45–52 (HIMGSGKT) is a binding site for ATP. The DEXH box signature appears at 135–138 (DEAH). A Helicase C-terminal domain is found at 327-507 (KFKYFINRIQ…VLPFDIKKLL (181 aa)).

The protein belongs to the helicase family. VETF subfamily. As to quaternary structure, heterodimer of a 70 kDa and a 82 kDa subunit. Part of the early transcription complex composed of ETF, RAP94/OPG109, and the DNA-directed RNA polymerase.

It is found in the virion. Its function is as follows. Acts with RNA polymerase to initiate transcription from early gene promoters. Is recruited by the RPO-associated protein of 94 kDa RAP94/OPG109 to form the early transcription complex, which also contains the core RNA polymerase. ETF heterodimer binds to early gene promoters. The chain is Early transcription factor 70 kDa subunit (OPG118) from Homo sapiens (Human).